The sequence spans 293 residues: Elongation factor Ts (293 aa).

Residues 80 to 83 (TDFV) are involved in Mg(2+) ion dislocation from EF-Tu.

This sequence belongs to the EF-Ts family.

The protein localises to the cytoplasm. Its function is as follows. Associates with the EF-Tu.GDP complex and induces the exchange of GDP to GTP. It remains bound to the aminoacyl-tRNA.EF-Tu.GTP complex up to the GTP hydrolysis stage on the ribosome. The chain is Elongation factor Ts from Staphylococcus aureus (strain Mu3 / ATCC 700698).